We begin with the raw amino-acid sequence, 480 residues long: Glutamate--tRNA ligase (480 aa).

The 'HIGH' region motif lies at 21 to 31 (PSPTGYLHVGG). Cysteine 110, cysteine 112, cysteine 137, and histidine 139 together coordinate Zn(2+). Residues 248 to 252 (KLSKR) carry the 'KMSKS' region motif. Lysine 251 is a binding site for ATP.

Belongs to the class-I aminoacyl-tRNA synthetase family. Glutamate--tRNA ligase type 1 subfamily. In terms of assembly, monomer. The cofactor is Zn(2+).

Its subcellular location is the cytoplasm. It carries out the reaction tRNA(Glu) + L-glutamate + ATP = L-glutamyl-tRNA(Glu) + AMP + diphosphate. In terms of biological role, catalyzes the attachment of glutamate to tRNA(Glu) in a two-step reaction: glutamate is first activated by ATP to form Glu-AMP and then transferred to the acceptor end of tRNA(Glu). This is Glutamate--tRNA ligase from Haemophilus influenzae (strain PittEE).